Reading from the N-terminus, the 454-residue chain is uncharacterized protein (454 aa).

The tract at residues 1–25 is disordered; that stretch reads MHGPTSKAISRNVRSVKRPRRAPRP. Positions 14-23 are enriched in basic residues; it reads RSVKRPRRAP.

It localises to the cytoplasm. Its subcellular location is the nucleus. This is an uncharacterized protein from Saccharomyces cerevisiae (strain ATCC 204508 / S288c) (Baker's yeast).